The primary structure comprises 372 residues: NAD(P)H-quinone oxidoreductase subunit 1 (372 aa).

9 consecutive transmembrane segments (helical) span residues 27–47 (AIWM…GVLV), 65–85 (PEYI…KLVF), 97–117 (WLFT…YLIV), 128–148 (VGTG…GLLM), 166–186 (AAQS…IVMM), 204–224 (ILGW…IAAL), 266–286 (ILSA…PIPI), 308–328 (ALGI…AILL), and 347–367 (FLLP…LAFP).

This sequence belongs to the complex I subunit 1 family. In terms of assembly, NDH-1 is composed of at least 11 different subunits.

Its subcellular location is the cellular thylakoid membrane. The catalysed reaction is a plastoquinone + NADH + (n+1) H(+)(in) = a plastoquinol + NAD(+) + n H(+)(out). It catalyses the reaction a plastoquinone + NADPH + (n+1) H(+)(in) = a plastoquinol + NADP(+) + n H(+)(out). Its function is as follows. NDH-1 shuttles electrons from an unknown electron donor, via FMN and iron-sulfur (Fe-S) centers, to quinones in the respiratory and/or the photosynthetic chain. The immediate electron acceptor for the enzyme in this species is believed to be plastoquinone. Couples the redox reaction to proton translocation, and thus conserves the redox energy in a proton gradient. The sequence is that of NAD(P)H-quinone oxidoreductase subunit 1 from Nostoc sp. (strain PCC 7120 / SAG 25.82 / UTEX 2576).